The chain runs to 315 residues: Glycine--tRNA ligase alpha subunit (315 aa).

Belongs to the class-II aminoacyl-tRNA synthetase family. As to quaternary structure, tetramer of two alpha and two beta subunits.

It is found in the cytoplasm. The catalysed reaction is tRNA(Gly) + glycine + ATP = glycyl-tRNA(Gly) + AMP + diphosphate. The protein is Glycine--tRNA ligase alpha subunit of Pseudomonas syringae pv. tomato (strain ATCC BAA-871 / DC3000).